Reading from the N-terminus, the 248-residue chain is Short-chain dehydrogenase/reductase iacG (248 aa).

I14, N35, K41, D58, R120, and V187 together coordinate NADP(+).

The protein belongs to the short-chain dehydrogenases/reductases (SDR) family.

The protein operates within secondary metabolite biosynthesis. Short-chain dehydrogenase/reductase; part of the gene cluster that mediates the biosynthesis of iso-A82775C, a enylepoxycyclohexane and biosynthetic precursor of the chloropestolide anticancer natural products. Within the cluster, the prenyltransferase iacE prenylates siccayne to generate pestalodiol E, using dimethylallyl diphosphate (DMAPP) as cosubstrate. The probable oxidoreductase iacF is then involved in the epoxidation of pestalodiol F to pestalodiol F, which is further converted to pestalofone A by the short-chain dehydrogenase/reductase iacG. Iso-A82775C is subsequently generated from pestalofone A by the short-chain dehydrogenase/reductase iacC. Iso-A82775C is further condensed with maldoxin via a Diels-Alder reaction to produce the anticancer natural products chloropestolides A to E. The chain is Short-chain dehydrogenase/reductase iacG from Pestalotiopsis fici (strain W106-1 / CGMCC3.15140).